Consider the following 314-residue polypeptide: DNA-directed RNA polymerase subunit alpha (314 aa).

Positions 1–227 are alpha N-terminal domain (alpha-NTD); that stretch reads MTKFEIECVE…ELLHPLKEIN (227 aa). The alpha C-terminal domain (alpha-CTD) stretch occupies residues 241–314; sequence KINQILIEEL…LPKEKTVKPN (74 aa).

It belongs to the RNA polymerase alpha chain family. In terms of assembly, in plastids the minimal PEP RNA polymerase catalytic core is composed of four subunits: alpha, beta, beta', and beta''. When a (nuclear-encoded) sigma factor is associated with the core the holoenzyme is formed, which can initiate transcription.

The protein resides in the plastid. It is found in the chloroplast. It catalyses the reaction RNA(n) + a ribonucleoside 5'-triphosphate = RNA(n+1) + diphosphate. DNA-dependent RNA polymerase catalyzes the transcription of DNA into RNA using the four ribonucleoside triphosphates as substrates. This is DNA-directed RNA polymerase subunit alpha from Rhodomonas salina (Cryptomonas salina).